Reading from the N-terminus, the 262-residue chain is Malonyl-[acyl-carrier protein] O-methyltransferase (262 aa).

Belongs to the methyltransferase superfamily.

The catalysed reaction is malonyl-[ACP] + S-adenosyl-L-methionine = malonyl-[ACP] methyl ester + S-adenosyl-L-homocysteine. The protein operates within cofactor biosynthesis; biotin biosynthesis. Its function is as follows. Converts the free carboxyl group of a malonyl-thioester to its methyl ester by transfer of a methyl group from S-adenosyl-L-methionine (SAM). It allows to synthesize pimeloyl-ACP via the fatty acid synthetic pathway. This chain is Malonyl-[acyl-carrier protein] O-methyltransferase, found in Erwinia pyrifoliae (strain DSM 12163 / CIP 106111 / Ep16/96).